Reading from the N-terminus, the 195-residue chain is Phosphoheptose isomerase (195 aa).

The SIS domain occupies 36-195 (LVDSLKGDGI…IIEKELFGLD (160 aa)). Residue 51 to 53 (NGG) participates in substrate binding. Zn(2+) contacts are provided by His60 and Glu64. Substrate-binding positions include Glu64, 95-96 (ND), 121-123 (TTS), Ser126, and Gln173. Zn(2+)-binding residues include Gln173 and His181.

Belongs to the SIS family. GmhA subfamily. The cofactor is Zn(2+).

It is found in the cytoplasm. The catalysed reaction is 2 D-sedoheptulose 7-phosphate = D-glycero-alpha-D-manno-heptose 7-phosphate + D-glycero-beta-D-manno-heptose 7-phosphate. The protein operates within carbohydrate biosynthesis; D-glycero-D-manno-heptose 7-phosphate biosynthesis; D-glycero-alpha-D-manno-heptose 7-phosphate and D-glycero-beta-D-manno-heptose 7-phosphate from sedoheptulose 7-phosphate: step 1/1. Functionally, catalyzes the isomerization of sedoheptulose 7-phosphate in D-glycero-D-manno-heptose 7-phosphate. The polypeptide is Phosphoheptose isomerase (Leptospira biflexa serovar Patoc (strain Patoc 1 / Ames)).